Here is a 175-residue protein sequence, read N- to C-terminus: NADH-quinone oxidoreductase subunit B (175 aa).

[4Fe-4S] cluster is bound by residues C49, C50, C115, and C145.

Belongs to the complex I 20 kDa subunit family. In terms of assembly, NDH-1 is composed of 14 different subunits. Subunits NuoB, C, D, E, F, and G constitute the peripheral sector of the complex. The cofactor is [4Fe-4S] cluster.

The protein resides in the cell membrane. It carries out the reaction a quinone + NADH + 5 H(+)(in) = a quinol + NAD(+) + 4 H(+)(out). In terms of biological role, NDH-1 shuttles electrons from NADH, via FMN and iron-sulfur (Fe-S) centers, to quinones in the respiratory chain. The immediate electron acceptor for the enzyme in this species is believed to be a menaquinone. Couples the redox reaction to proton translocation (for every two electrons transferred, four hydrogen ions are translocated across the cytoplasmic membrane), and thus conserves the redox energy in a proton gradient. The chain is NADH-quinone oxidoreductase subunit B from Heliobacterium modesticaldum (strain ATCC 51547 / Ice1).